A 343-amino-acid chain; its full sequence is Putative mediator of RNA polymerase II transcription subunit 4 (343 aa).

Residues 86–125 (LKKLEKHQKIQKEITEIQKEIEEKDKLISTLALNLKDIES) adopt a coiled-coil conformation. The interval 247–343 (ISSPFSIGGN…DEESEEVEWD (97 aa)) is disordered. The segment covering 271 to 316 (QQQQQQQQQPQQQLSQSQQSQQQTESELQPIQSILQPPQQLNIDLD) has biased composition (low complexity). The segment covering 317–343 (LNPDLDSSGDDDDEDDDDEESEEVEWD) has biased composition (acidic residues).

It belongs to the Mediator complex subunit 4 family. As to quaternary structure, component of the Mediator complex.

The protein resides in the nucleus. Functionally, component of the Mediator complex, a coactivator involved in the regulated transcription of nearly all RNA polymerase II-dependent genes. Mediator functions as a bridge to convey information from gene-specific regulatory proteins to the basal RNA polymerase II transcription machinery. Mediator is recruited to promoters by direct interactions with regulatory proteins and serves as a scaffold for the assembly of a functional preinitiation complex with RNA polymerase II and the general transcription factors. This Dictyostelium discoideum (Social amoeba) protein is Putative mediator of RNA polymerase II transcription subunit 4 (med4).